Consider the following 271-residue polypeptide: Phosphatidylglycerol--prolipoprotein diacylglyceryl transferase (271 aa).

7 consecutive transmembrane segments (helical) span residues 21 to 41 (LAVR…MWLA), 60 to 80 (LLFA…VIFY), 95 to 115 (VWTG…AMFW), 124 to 144 (FFGV…MGRI), 177 to 197 (QLYE…WFIG), 203 to 223 (GSVS…VEYV), and 236 to 256 (FISM…LMMV). Arg-143 lines the a 1,2-diacyl-sn-glycero-3-phospho-(1'-sn-glycerol) pocket.

The protein belongs to the Lgt family.

It localises to the cell inner membrane. The enzyme catalyses L-cysteinyl-[prolipoprotein] + a 1,2-diacyl-sn-glycero-3-phospho-(1'-sn-glycerol) = an S-1,2-diacyl-sn-glyceryl-L-cysteinyl-[prolipoprotein] + sn-glycerol 1-phosphate + H(+). The protein operates within protein modification; lipoprotein biosynthesis (diacylglyceryl transfer). Catalyzes the transfer of the diacylglyceryl group from phosphatidylglycerol to the sulfhydryl group of the N-terminal cysteine of a prolipoprotein, the first step in the formation of mature lipoproteins. This Vibrio cholerae serotype O1 (strain ATCC 39541 / Classical Ogawa 395 / O395) protein is Phosphatidylglycerol--prolipoprotein diacylglyceryl transferase.